We begin with the raw amino-acid sequence, 405 residues long: Formin-like protein 15a (405 aa).

The tract at residues 1-31 is disordered; sequence MSLVEISGSDAMAAPMPGRVPPPPPRPPPMP. Over residues 18-31 the composition is skewed to pro residues; that stretch reads GRVPPPPPRPPPMP. Residues 52–405 form the FH2 domain; it reads FPRPAKKRAS…VCWFFVRLMI (354 aa).

Belongs to the formin-like family. Class-II subfamily.

The polypeptide is Formin-like protein 15a (FH15A) (Arabidopsis thaliana (Mouse-ear cress)).